The chain runs to 483 residues: Auxin transporter-like protein 2 (483 aa).

Topologically, residues 1–53 (MENGEKAAETVVVGNYVEMEKDGKALDIKSKLSDMFWHGGSAYDAWFSCASNQ) are cytoplasmic. Residues 54–71 (VAQVLLTLPYSFSQLGML) form a helical membrane-spanning segment. Over 72–73 (SG) the chain is Extracellular. A helical transmembrane segment spans residues 74–94 (ILFQLFYGILGSWTAYLISIL). Over 95 to 130 (YVEYRTRKEREKVNFRNHVIQWFEVLDGLLGKHWRN) the chain is Cytoplasmic. The chain crosses the membrane as a helical span at residues 131–151 (VGLAFNCTFLLFGSVIQLIAC). Residues 152–166 (ASNIYYINDNLDKRT) lie on the Extracellular side of the membrane. Residues 167–187 (WTYIFGACCATTVFIPSFHNY) form a helical membrane-spanning segment. The Cytoplasmic portion of the chain corresponds to 188–190 (RIW). A helical membrane pass occupies residues 191–211 (SFLGLLMTTYTAWYLTIASIL). The Extracellular segment spans residues 212–226 (HGQVEGVKHSGPSKL). The chain crosses the membrane as a helical span at residues 227-247 (VLYFTGATNILYTFGGHAVTV). Over 248–261 (EIMHAMWKPQKFKS) the chain is Cytoplasmic. Residues 262-282 (IYLFATLYVLTLTLPSASAVY) traverse the membrane as a helical segment. At 283–306 (WAFGDLLLNHSNAFALLPKNLYRD) the chain is on the extracellular side. Residue Asn-291 is glycosylated (N-linked (GlcNAc...) asparagine). The helical transmembrane segment at 307 to 327 (FAVVLMLIHQFITFGFACTPL) threads the bilayer. The Cytoplasmic portion of the chain corresponds to 328 to 350 (YFVWEKLIGMHECRSMCKRAAAR). A helical membrane pass occupies residues 351–371 (LPVVIPIWFLAIIFPFFGPIN). Residues 372–374 (STV) lie on the Extracellular side of the membrane. A helical membrane pass occupies residues 375–395 (GSLLVSFTVYIIPALAHIFTF). The Cytoplasmic segment spans residues 396-422 (RSSAARENAVEQPPRFLGRWTGAFTIN). Residues 423–443 (AFIVVWVFIVGFGFGGWASMI) traverse the membrane as a helical segment. Residues 444–483 (NFVHQIDTFGLFTKCYQCPPPVMVSPPPISHPHFNHTHGL) lie on the Extracellular side of the membrane. Residue Asn-478 is glycosylated (N-linked (GlcNAc...) asparagine).

This sequence belongs to the amino acid/polyamine transporter 2 family. Amino acid/auxin permease (AAAP) (TC 2.A.18.1) subfamily.

It localises to the cell membrane. In terms of biological role, carrier protein involved in proton-driven auxin influx. Mediates the formation of auxin gradient from developing leaves (site of auxin biosynthesis) to tips by contributing to the loading of auxin in vascular tissues and facilitating acropetal (base to tip) auxin transport within inner tissues of the root apex, and basipetal (tip to base) auxin transport within outer tissues of the root apex. The sequence is that of Auxin transporter-like protein 2 (LAX2) from Arabidopsis thaliana (Mouse-ear cress).